Here is a 145-residue protein sequence, read N- to C-terminus: Basic leucine zipper 1 (145 aa).

Polar residues predominate over residues 1–11 (MANAEKTSSGS). The segment at 1–39 (MANAEKTSSGSDIDEKKRKRKLSNRESARRSRLKKQKLM) is disordered. One can recognise a bZIP domain in the interval 14–77 (DEKKRKRKLS…DSVETENAGL (64 aa)). A basic motif region spans residues 16–37 (KKRKRKLSNRESARRSRLKKQK). The leucine-zipper stretch occupies residues 46 to 53 (ISSLERRI).

Belongs to the bZIP family. As to quaternary structure, interacts with ZFP7, BZIP4, BZIP9, BZIP10, BZIP11, BZIP25, BZIP42, BZIP44, BZIP53, BZIP58 and BZIP63. In terms of tissue distribution, expressed in both shoots, including young leaves, stipulae and trichomes (except in cotyledons and hypocotyl), and roots, including vascular tissues (e.g. in both the phloem and the xylem). Present in seeds and pollen. Restricted to vasculatures and roots in the presence of sucrose or glucose.

It is found in the nucleus. Transcription factor that binds to the C-box-like motif (5'-TGCTGACGTCA-3') and G-box-like motif (5'-CCACGTGGCC-3'), ABRE elements, of gene promoters involved in sugar signaling. Activated by low energy stress both at transcriptional and post-transcriptional mechanisms. Promotes dark-induced senescence and participates in the transcriptional reprogramming of amino acid metabolism during the dark-induced starvation response. Transcription activator of the mannan synthase CSLA9. Recognizes and binds to DNA-specific sequence of CSLA9 promoter. The protein is Basic leucine zipper 1 (BZIP1) of Arabidopsis thaliana (Mouse-ear cress).